Reading from the N-terminus, the 1155-residue chain is DNA-directed RNA polymerase subunit beta (1155 aa).

This sequence belongs to the RNA polymerase beta chain family. As to quaternary structure, the RNAP catalytic core consists of 2 alpha, 1 beta, 1 beta' and 1 omega subunit. When a sigma factor is associated with the core the holoenzyme is formed, which can initiate transcription.

It carries out the reaction RNA(n) + a ribonucleoside 5'-triphosphate = RNA(n+1) + diphosphate. In terms of biological role, DNA-dependent RNA polymerase catalyzes the transcription of DNA into RNA using the four ribonucleoside triphosphates as substrates. The protein is DNA-directed RNA polymerase subunit beta of Borreliella burgdorferi (strain ZS7) (Borrelia burgdorferi).